Here is a 418-residue protein sequence, read N- to C-terminus: UDP-N-acetylglucosamine 1-carboxyvinyltransferase (418 aa).

Residue 23-24 coordinates phosphoenolpyruvate; the sequence is KN. Arg93 serves as a coordination point for UDP-N-acetyl-alpha-D-glucosamine. Asp117 functions as the Proton donor in the catalytic mechanism. Asp305 and Val327 together coordinate UDP-N-acetyl-alpha-D-glucosamine.

Belongs to the EPSP synthase family. MurA subfamily.

It localises to the cytoplasm. The enzyme catalyses phosphoenolpyruvate + UDP-N-acetyl-alpha-D-glucosamine = UDP-N-acetyl-3-O-(1-carboxyvinyl)-alpha-D-glucosamine + phosphate. It participates in cell wall biogenesis; peptidoglycan biosynthesis. Cell wall formation. Adds enolpyruvyl to UDP-N-acetylglucosamine. The sequence is that of UDP-N-acetylglucosamine 1-carboxyvinyltransferase from Mycobacterium bovis (strain ATCC BAA-935 / AF2122/97).